Here is a 274-residue protein sequence, read N- to C-terminus: Dermonecrotic toxin SdSicTox-betaIIB1biv (274 aa).

His-5 is a catalytic residue. Positions 25 and 27 each coordinate Mg(2+). His-41 functions as the Nucleophile in the catalytic mechanism. 2 disulfides stabilise this stretch: Cys-45/Cys-51 and Cys-47/Cys-190. Asp-85 contributes to the Mg(2+) binding site.

This sequence belongs to the arthropod phospholipase D family. Class II subfamily. Requires Mg(2+) as cofactor. As to expression, expressed by the venom gland.

The protein localises to the secreted. It catalyses the reaction an N-(acyl)-sphingosylphosphocholine = an N-(acyl)-sphingosyl-1,3-cyclic phosphate + choline. The enzyme catalyses an N-(acyl)-sphingosylphosphoethanolamine = an N-(acyl)-sphingosyl-1,3-cyclic phosphate + ethanolamine. It carries out the reaction a 1-acyl-sn-glycero-3-phosphocholine = a 1-acyl-sn-glycero-2,3-cyclic phosphate + choline. The catalysed reaction is a 1-acyl-sn-glycero-3-phosphoethanolamine = a 1-acyl-sn-glycero-2,3-cyclic phosphate + ethanolamine. Dermonecrotic toxins cleave the phosphodiester linkage between the phosphate and headgroup of certain phospholipids (sphingolipid and lysolipid substrates), forming an alcohol (often choline) and a cyclic phosphate. This toxin acts on sphingomyelin (SM). It may also act on ceramide phosphoethanolamine (CPE), lysophosphatidylcholine (LPC) and lysophosphatidylethanolamine (LPE), but not on lysophosphatidylserine (LPS), and lysophosphatidylglycerol (LPG). It acts by transphosphatidylation, releasing exclusively cyclic phosphate products as second products. Induces dermonecrosis, hemolysis, increased vascular permeability, edema, inflammatory response, and platelet aggregation. The sequence is that of Dermonecrotic toxin SdSicTox-betaIIB1biv from Sicarius cf. damarensis (strain GJB-2008) (Six-eyed sand spider).